A 1459-amino-acid polypeptide reads, in one-letter code: ARF guanine-nucleotide exchange factor 2 (1459 aa).

S46 and S284 each carry phosphoserine. Residues 570–714 (FNEKPKKGIP…IIMLNTDLHN (145 aa)) enclose the SEC7 domain. The tract at residues 1412–1459 (EKGNGSSSHGSAHEQTPESNDVEIEATAPIDDNTDDDNKPKLSDVEKD) is disordered. Over residues 1447–1459 (DDNKPKLSDVEKD) the composition is skewed to basic and acidic residues.

As to quaternary structure, interacts (via SEC7 domain) with DRS2 (via C-terminus); the interaction is direct. Interacts with GMH1.

The protein resides in the cytoplasm. It is found in the cytosol. The protein localises to the membrane. It localises to the golgi apparatus membrane. In terms of biological role, activates the ARF proteins by exchanging bound GDP for free GTP. Plays a role in maintaining mitochondrial morphology. Stimulates DRS2 flippase activity. In Saccharomyces cerevisiae (strain ATCC 204508 / S288c) (Baker's yeast), this protein is ARF guanine-nucleotide exchange factor 2 (GEA2).